Consider the following 359-residue polypeptide: Phospho-N-acetylmuramoyl-pentapeptide-transferase (359 aa).

The next 10 membrane-spanning stretches (helical) occupy residues 3-23, 55-75, 84-104, 120-140, 156-176, 187-207, 231-251, 255-275, 280-300, and 334-354; these read QILI…PVLI, VAIL…GLAL, GLLV…DDLI, TVGI…FGNA, IATV…LVSA, LDGL…LITF, LALV…WNAA, IFMG…LSVT, ILAV…VVQI, and FWLL…GEWL.

Belongs to the glycosyltransferase 4 family. MraY subfamily. The cofactor is Mg(2+).

It localises to the cell membrane. The catalysed reaction is UDP-N-acetyl-alpha-D-muramoyl-L-alanyl-gamma-D-glutamyl-meso-2,6-diaminopimeloyl-D-alanyl-D-alanine + di-trans,octa-cis-undecaprenyl phosphate = di-trans,octa-cis-undecaprenyl diphospho-N-acetyl-alpha-D-muramoyl-L-alanyl-D-glutamyl-meso-2,6-diaminopimeloyl-D-alanyl-D-alanine + UMP. Its pathway is cell wall biogenesis; peptidoglycan biosynthesis. Its function is as follows. Catalyzes the initial step of the lipid cycle reactions in the biosynthesis of the cell wall peptidoglycan: transfers peptidoglycan precursor phospho-MurNAc-pentapeptide from UDP-MurNAc-pentapeptide onto the lipid carrier undecaprenyl phosphate, yielding undecaprenyl-pyrophosphoryl-MurNAc-pentapeptide, known as lipid I. This is Phospho-N-acetylmuramoyl-pentapeptide-transferase from Mycobacterium sp. (strain MCS).